A 616-amino-acid chain; its full sequence is Chaperone protein HscA (616 aa).

The protein belongs to the heat shock protein 70 family.

Its function is as follows. Chaperone involved in the maturation of iron-sulfur cluster-containing proteins. Has a low intrinsic ATPase activity which is markedly stimulated by HscB. Involved in the maturation of IscU. In Salmonella paratyphi B (strain ATCC BAA-1250 / SPB7), this protein is Chaperone protein HscA.